The primary structure comprises 415 residues: Serine/threonine transporter SstT (415 aa).

The next 8 membrane-spanning stretches (helical) occupy residues Ile23 to Ala43, Leu47 to Val67, Ile85 to Phe105, Ala144 to Leu164, Ala181 to Val201, Leu220 to Phe240, Gly303 to Val323, and Val333 to Ile353.

This sequence belongs to the dicarboxylate/amino acid:cation symporter (DAACS) (TC 2.A.23) family.

It is found in the cell inner membrane. It catalyses the reaction L-serine(in) + Na(+)(in) = L-serine(out) + Na(+)(out). The enzyme catalyses L-threonine(in) + Na(+)(in) = L-threonine(out) + Na(+)(out). Involved in the import of serine and threonine into the cell, with the concomitant import of sodium (symport system). In Cronobacter sakazakii (strain ATCC BAA-894) (Enterobacter sakazakii), this protein is Serine/threonine transporter SstT.